A 423-amino-acid polypeptide reads, in one-letter code: Lysosomal acid phosphatase (423 aa).

Positions 1–30 (MAGRQSGWSQAALLQFLLGMCLMVMPPIQA) are cleaved as a signal peptide. Topologically, residues 31–380 (RSLRFVTLLY…QLASDTADTE (350 aa)) are lumenal. The active-site Nucleophile is histidine 42. N-linked (GlcNAc...) asparagine glycosylation is found at asparagine 92, asparagine 133, asparagine 167, asparagine 177, asparagine 191, asparagine 197, and asparagine 267. Intrachain disulfides connect cysteine 159-cysteine 370, cysteine 212-cysteine 310, and cysteine 345-cysteine 349. Catalysis depends on aspartate 287, which acts as the Proton donor. Asparagine 322 and asparagine 331 each carry an N-linked (GlcNAc...) asparagine glycan. The chain crosses the membrane as a helical span at residues 381–401 (VIVALAVCGSILFLLIVLLLT). Topologically, residues 402-423 (VLFRMQAQPPGYHHVADREDHA) are cytoplasmic.

The protein belongs to the histidine acid phosphatase family. In terms of processing, the membrane-bound form is converted to the soluble form by sequential proteolytic processing. First, the C-terminal cytoplasmic tail is removed. Cleavage by a lysosomal protease releases the soluble form in the lysosome lumen.

The protein localises to the lysosome membrane. The protein resides in the lysosome lumen. The catalysed reaction is a phosphate monoester + H2O = an alcohol + phosphate. This is Lysosomal acid phosphatase (Acp2) from Rattus norvegicus (Rat).